A 433-amino-acid chain; its full sequence is Putative wall-associated receptor kinase-like 16 (433 aa).

The first 22 residues, 1–22, serve as a signal peptide directing secretion; that stretch reads MKLQHVVYLVAIFFVVAIFVIA. Residues 23 to 29 lie on the Extracellular side of the membrane; the sequence is CIEENKY. The chain crosses the membrane as a helical span at residues 30 to 50; sequence LVWIMIILANTTNILSLVRSI. The Cytoplasmic segment spans residues 51–433; sequence SYIKNIRKHQ…VARFDIEAGR (383 aa). The residue at position 97 (T97) is a Phosphothreonine. Residues 108–391 enclose the Protein kinase domain; that stretch reads YDVSRILGQG…RAKTTKHNWL (284 aa). Residues 114 to 122 and K136 contribute to the ATP site; that span reads LGQGGQWTV. Residue Y181 is modified to Phosphotyrosine. D233 (proton acceptor) is an active-site residue. T267 and T272 each carry phosphothreonine. A Phosphotyrosine modification is found at Y280.

This sequence belongs to the protein kinase superfamily. Ser/Thr protein kinase family.

Its subcellular location is the membrane. It carries out the reaction L-seryl-[protein] + ATP = O-phospho-L-seryl-[protein] + ADP + H(+). It catalyses the reaction L-threonyl-[protein] + ATP = O-phospho-L-threonyl-[protein] + ADP + H(+). Its function is as follows. Putative serine/threonine-protein kinase that may function as a signaling receptor of extracellular matrix component. The chain is Putative wall-associated receptor kinase-like 16 (WAKL16) from Arabidopsis thaliana (Mouse-ear cress).